A 60-amino-acid polypeptide reads, in one-letter code: Large ribosomal subunit protein uL30 (60 aa).

It belongs to the universal ribosomal protein uL30 family. Part of the 50S ribosomal subunit.

The polypeptide is Large ribosomal subunit protein uL30 (Syntrophobacter fumaroxidans (strain DSM 10017 / MPOB)).